We begin with the raw amino-acid sequence, 1438 residues long: DNA polymerase III PolC-type (1438 aa).

Residues 422–578 (YVVFDVETTG…YDTEATAYIF (157 aa)) form the Exonuclease domain.

It belongs to the DNA polymerase type-C family. PolC subfamily.

Its subcellular location is the cytoplasm. The enzyme catalyses DNA(n) + a 2'-deoxyribonucleoside 5'-triphosphate = DNA(n+1) + diphosphate. Its function is as follows. Required for replicative DNA synthesis. This DNA polymerase also exhibits 3' to 5' exonuclease activity. The protein is DNA polymerase III PolC-type of Staphylococcus epidermidis (strain ATCC 35984 / DSM 28319 / BCRC 17069 / CCUG 31568 / BM 3577 / RP62A).